A 277-amino-acid polypeptide reads, in one-letter code: Phosphonates import ATP-binding protein PhnC 2 (277 aa).

Positions 5–253 (IHVQGLNKTF…FLNDLYGADA (249 aa)) constitute an ABC transporter domain. ATP is bound at residue 37-44 (GASGSGKS).

The protein belongs to the ABC transporter superfamily. Phosphonates importer (TC 3.A.1.9.1) family. The complex is composed of two ATP-binding proteins (PhnC), two transmembrane proteins (PhnE) and a solute-binding protein (PhnD).

The protein resides in the cell inner membrane. The enzyme catalyses phosphonate(out) + ATP + H2O = phosphonate(in) + ADP + phosphate + H(+). Part of the ABC transporter complex PhnCDE involved in phosphonates import. Responsible for energy coupling to the transport system. The polypeptide is Phosphonates import ATP-binding protein PhnC 2 (Pseudomonas syringae pv. syringae (strain B728a)).